The primary structure comprises 440 residues: uncharacterized protein (440 aa).

The N-terminal stretch at 1–17 (MDRFFCTVWVWSVLFGA) is a signal peptide. Cys-18 carries N-palmitoyl cysteine lipidation. The S-diacylglycerol cysteine moiety is linked to residue Cys-18. Positions 241-268 (SALQERPSSPEPVVSTIPSPEGEENSAA) are disordered.

It localises to the cell membrane. This is an uncharacterized protein from Treponema pallidum (strain Nichols).